Reading from the N-terminus, the 74-residue chain is MAFLKKSVFLVLFLGLVSLSICEEEKREEENEEKQEDDEQSEEKRALWKNMLKGIGKLAGQAALGAVKTLVGAE.

A signal peptide spans 1–22 (MAFLKKSVFLVLFLGLVSLSIC). A propeptide spanning residues 23-43 (EEEKREEENEEKQEDDEQSEE) is cleaved from the precursor.

Expressed by the skin glands.

The protein resides in the secreted. Functionally, possesses a potent antimicrobial activity against Gram-positive and Gram-negative bacteria. Probably acts by disturbing membrane functions with its amphipathic structure. This chain is Dermaseptin-B3, found in Phyllomedusa bicolor (Two-colored leaf frog).